The chain runs to 190 residues: Elongation factor P 2 (190 aa).

This sequence belongs to the elongation factor P family.

It localises to the cytoplasm. It participates in protein biosynthesis; polypeptide chain elongation. Functionally, involved in peptide bond synthesis. Stimulates efficient translation and peptide-bond synthesis on native or reconstituted 70S ribosomes in vitro. Probably functions indirectly by altering the affinity of the ribosome for aminoacyl-tRNA, thus increasing their reactivity as acceptors for peptidyl transferase. The chain is Elongation factor P 2 (efp2) from Chlamydia muridarum (strain MoPn / Nigg).